Reading from the N-terminus, the 414-residue chain is Alanine--glyoxylate aminotransferase (414 aa).

The N-terminal 23 residues, 1-23 (MFRALARASATLGPQVAGWARTM), are a transit peptide targeting the mitochondrion. At lysine 231 the chain carries N6-(pyridoxal phosphate)lysine. Lysine 247 carries the N6-acetyllysine; alternate modification. An N6-succinyllysine; alternate modification is found at lysine 247. N6-acetyllysine is present on residues lysine 256 and lysine 334. Residue arginine 382 coordinates substrate. Residues 412–414 (NKL) carry the Microbody targeting signal motif.

Belongs to the class-V pyridoxal-phosphate-dependent aminotransferase family. In terms of assembly, homodimer. Pyridoxal 5'-phosphate is required as a cofactor.

Its subcellular location is the peroxisome. The protein resides in the mitochondrion matrix. It carries out the reaction L-serine + pyruvate = 3-hydroxypyruvate + L-alanine. It catalyses the reaction glyoxylate + L-alanine = glycine + pyruvate. Catalyzes the transamination of glyoxylate to glycine and contributes to the glyoxylate detoxification. Functionally, catalyzes the transamination between L-serine and pyruvate and contributes to gluconeogenesis from the L-serine metabolism. The sequence is that of Alanine--glyoxylate aminotransferase from Felis catus (Cat).